The sequence spans 715 residues: Glycine--tRNA ligase beta subunit (715 aa).

Belongs to the class-II aminoacyl-tRNA synthetase family. Tetramer of two alpha and two beta subunits.

The protein resides in the cytoplasm. The catalysed reaction is tRNA(Gly) + glycine + ATP = glycyl-tRNA(Gly) + AMP + diphosphate. The sequence is that of Glycine--tRNA ligase beta subunit from Nitrosomonas eutropha (strain DSM 101675 / C91 / Nm57).